A 199-amino-acid polypeptide reads, in one-letter code: Large ribosomal subunit protein bL25 (199 aa).

It belongs to the bacterial ribosomal protein bL25 family. CTC subfamily. As to quaternary structure, part of the 50S ribosomal subunit; part of the 5S rRNA/L5/L18/L25 subcomplex. Contacts the 5S rRNA. Binds to the 5S rRNA independently of L5 and L18.

In terms of biological role, this is one of the proteins that binds to the 5S RNA in the ribosome where it forms part of the central protuberance. The chain is Large ribosomal subunit protein bL25 from Nostoc punctiforme (strain ATCC 29133 / PCC 73102).